A 67-amino-acid chain; its full sequence is Conotoxin Cl6.10 (67 aa).

Positions 1–24 (MKLTCVLIAAVLLLAVCQLDSADA) are cleaved as a signal peptide. Positions 25-37 (TAYMRKDPSLRSP) are excised as a propeptide. Disulfide bonds link Cys-43-Cys-57, Cys-50-Cys-61, and Cys-56-Cys-65.

It belongs to the conotoxin O1 superfamily. Expressed by the venom duct.

The protein resides in the secreted. This is Conotoxin Cl6.10 from Californiconus californicus (California cone).